Reading from the N-terminus, the 367-residue chain is 2-aminoethylphosphonate--pyruvate transaminase (367 aa).

At lysine 194 the chain carries N6-(pyridoxal phosphate)lysine.

The protein belongs to the class-V pyridoxal-phosphate-dependent aminotransferase family. PhnW subfamily. In terms of assembly, homodimer. Pyridoxal 5'-phosphate serves as cofactor.

The enzyme catalyses (2-aminoethyl)phosphonate + pyruvate = phosphonoacetaldehyde + L-alanine. Its function is as follows. Involved in phosphonate degradation. In Salmonella choleraesuis (strain SC-B67), this protein is 2-aminoethylphosphonate--pyruvate transaminase.